A 624-amino-acid polypeptide reads, in one-letter code: FAD-dependent monooxygenase apdD (624 aa).

E73 and D359 together coordinate FAD.

Belongs to the paxM FAD-dependent monooxygenase family. FAD serves as cofactor.

The protein operates within secondary metabolite biosynthesis. Its function is as follows. FAD-dependent monooxygenase; part of the gene cluster that mediates the biosynthesis of aspyridones. The polyketide-amino acid backbone preaspyridone A is first assembled by the PKS-NRPS hybrid apdA. The assembly of preaspyridone A is initiated by loading of malonyl-CoA onto apdA, followed by decarboxylation to yield the acetyl starter unit. The growing polyketide chain then elongates into a tetraketide. The adpA PKS module catalyzes three Claisen condensations, as well as beta-keto processing and methylation. Alpha-methylation step during polyketide synthesis is a prerequisite and a key checkpoint for chain transfer between PKS and NRPS modules. The downstream NRPS module contains the condensation (C), adenylation (A), and thiolation (T) domains and catalyzes the incorporation of tyrosine via the formation of the L-tyrosinyl-thioester and the amide linkage between L-tyrosinyl-thioester and the tetraketide. The bimodular assembly line is terminated with a reductase (R) domain that facilitates formation and release of the tetramic acid product. Because apdA lacks a designated enoylreductase (ER) domain, the required activity is provided the enoyl reductase apdC. ApdC appears to operate with different stereoselectivity in different PKS cycle. Combined with apdC, apdA is proposed to synthesize preaspyridone A via about 20 enzymatic steps. A number of oxidative steps performed successively by the cytochrome P450 monooxygenases apdE and apdB are required for the conversion of preaspyridone A to aspyridone A. The cytochrome P450 monooxygenase apdE is responsible for the oxidative dephenylation of preaspyridone A. Finally, the predicted FAD-dependent monooxygenase apdD and the acyl-CoA dehydrogenase apdG may be involved in the transformation of aspyridone A into aspyridone B. The polypeptide is FAD-dependent monooxygenase apdD (Emericella nidulans (strain FGSC A4 / ATCC 38163 / CBS 112.46 / NRRL 194 / M139) (Aspergillus nidulans)).